The following is a 526-amino-acid chain: Chaperonin GroEL 2 (526 aa).

3 residues coordinate ATP: lysine 50, glycine 413, and aspartate 494.

It belongs to the chaperonin (HSP60) family. Forms a cylinder of 14 subunits composed of two heptameric rings stacked back-to-back. Interacts with the co-chaperonin GroES.

The protein resides in the cytoplasm. The enzyme catalyses ATP + H2O + a folded polypeptide = ADP + phosphate + an unfolded polypeptide.. Functionally, together with its co-chaperonin GroES, plays an essential role in assisting protein folding. The GroEL-GroES system forms a nano-cage that allows encapsulation of the non-native substrate proteins and provides a physical environment optimized to promote and accelerate protein folding. The protein is Chaperonin GroEL 2 of Chlamydia pneumoniae (Chlamydophila pneumoniae).